Consider the following 810-residue polypeptide: LPS-assembly protein LptD (810 aa).

A signal peptide spans 1 to 29 (MTKRTLGYSYPIALTISLVPALTPAIVQA).

It belongs to the LptD family. As to quaternary structure, component of the lipopolysaccharide transport and assembly complex. Interacts with LptE and LptA.

It localises to the cell outer membrane. Functionally, together with LptE, is involved in the assembly of lipopolysaccharide (LPS) at the surface of the outer membrane. The protein is LPS-assembly protein LptD of Aeromonas hydrophila subsp. hydrophila (strain ATCC 7966 / DSM 30187 / BCRC 13018 / CCUG 14551 / JCM 1027 / KCTC 2358 / NCIMB 9240 / NCTC 8049).